The sequence spans 232 residues: Large ribosomal subunit protein uL1 (232 aa).

The protein belongs to the universal ribosomal protein uL1 family. As to quaternary structure, part of the 50S ribosomal subunit.

Binds directly to 23S rRNA. The L1 stalk is quite mobile in the ribosome, and is involved in E site tRNA release. Its function is as follows. Protein L1 is also a translational repressor protein, it controls the translation of the L11 operon by binding to its mRNA. The protein is Large ribosomal subunit protein uL1 of Chlamydia caviae (strain ATCC VR-813 / DSM 19441 / 03DC25 / GPIC) (Chlamydophila caviae).